The following is a 213-amino-acid chain: Histone H1.2 (213 aa).

Residues 1–17 (MSETAPAAPAAAPPAEK) are compositionally biased toward low complexity. The disordered stretch occupies residues 1-41 (MSETAPAAPAAAPPAEKTPVKKKAAKKPAGARRKASGPPVS). S2 is modified (N-acetylserine; partial). Residue S2 is modified to Phosphoserine. Residue K17 is modified to N6-acetyllysine. The span at 20 to 35 (VKKKAAKKPAGARRKA) shows a compositional bias: basic residues. N6-(2-hydroxyisobutyryl)lysine occurs at positions 23, 26, and 27. The residue at position 34 (K34) is an N6-(beta-hydroxybutyryl)lysine; alternate. K34 carries the post-translational modification N6-crotonyllysine; alternate. The residue at position 34 (K34) is an N6-methyllysine; alternate. The H15 domain maps to 36–109 (SGPPVSELIT…GASGSFKLNK (74 aa)). An N6-(2-hydroxyisobutyryl)lysine modification is found at K46. K52 bears the N6-(beta-hydroxybutyryl)lysine; alternate mark. N6-(2-hydroxyisobutyryl)lysine; alternate is present on K52. R54 bears the Citrulline mark. At K63 the chain carries N6-(2-hydroxyisobutyryl)lysine. K64 is subject to N6-(beta-hydroxybutyryl)lysine; alternate. The residue at position 64 (K64) is an N6-crotonyllysine; alternate. Residue K64 is modified to N6-(2-hydroxyisobutyryl)lysine; alternate. Residues K75 and K81 each carry the N6-(2-hydroxyisobutyryl)lysine modification. 2 positions are modified to N6-(beta-hydroxybutyryl)lysine; alternate: K85 and K90. 3 positions are modified to N6-crotonyllysine; alternate: K85, K90, and K97. K85, K90, and K97 each carry N6-(2-hydroxyisobutyryl)lysine; alternate. Positions 95 to 213 (QTKGTGASGS…KPKKAAPKKK (119 aa)) are disordered. K97 bears the N6-succinyllysine; alternate mark. S104 is subject to Phosphoserine; by PKC. The residue at position 106 (K106) is an N6-(beta-hydroxybutyryl)lysine. An N6-(2-hydroxyisobutyryl)lysine mark is found at K110, K117, K121, K129, and K136. The span at 119–140 (KAKKAGAAKPKKAAGAAKKTKK) shows a compositional bias: basic residues. T146 carries the phosphothreonine modification. K148 is modified (N6-(2-hydroxyisobutyryl)lysine). Residues 149-160 (KTAKKTPKKAKK) show a composition bias toward basic residues. An N6-crotonyllysine; alternate mark is found at K159 and K168. Residues K159 and K168 each carry the N6-(2-hydroxyisobutyryl)lysine; alternate modification. Basic residues predominate over residues 169–186 (KVAKSPKKAKAAKPKKAA). At K187 the chain carries N6-methyllysine; by EHMT1 and EHMT2. S188 carries the ADP-ribosylserine modification. Basic residues predominate over residues 193–213 (VKPKAAKPKVAKPKKAAPKKK).

It belongs to the histone H1/H5 family. Post-translationally, H1 histones are progressively phosphorylated during the cell cycle, becoming maximally phosphorylated during late G2 phase and M phase, and being dephosphorylated sharply thereafter. In terms of processing, crotonylation (Kcr) is specifically present in male germ cells and marks testis-specific genes in post-meiotic cells, including X-linked genes that escape sex chromosome inactivation in haploid cells. Crotonylation marks active promoters and enhancers and confers resistance to transcriptional repressors. It is also associated with post-meiotically activated genes on autosomes. ADP-ribosylated on Ser-188 in response to DNA damage. Post-translationally, citrullination at Arg-54 (H1R54ci) by PADI4 takes place within the DNA-binding site of H1 and results in its displacement from chromatin and global chromatin decondensation, thereby promoting pluripotency and stem cell maintenance.

It is found in the nucleus. The protein localises to the chromosome. Its function is as follows. Histone H1 protein binds to linker DNA between nucleosomes forming the macromolecular structure known as the chromatin fiber. Histones H1 are necessary for the condensation of nucleosome chains into higher-order structured fibers. Also acts as a regulator of individual gene transcription through chromatin remodeling, nucleosome spacing and DNA methylation. The sequence is that of Histone H1.2 from Bos taurus (Bovine).